An 80-amino-acid chain; its full sequence is Exodeoxyribonuclease 7 small subunit (80 aa).

Belongs to the XseB family. Heterooligomer composed of large and small subunits.

It is found in the cytoplasm. The enzyme catalyses Exonucleolytic cleavage in either 5'- to 3'- or 3'- to 5'-direction to yield nucleoside 5'-phosphates.. Bidirectionally degrades single-stranded DNA into large acid-insoluble oligonucleotides, which are then degraded further into small acid-soluble oligonucleotides. In Pseudomonas entomophila (strain L48), this protein is Exodeoxyribonuclease 7 small subunit.